A 397-amino-acid chain; its full sequence is Succinate--CoA ligase [ADP-forming] subunit beta (397 aa).

An ATP-grasp domain is found at 9-254; sequence KELLRGYGAP…TSEEDEKEIE (246 aa). Residues Lys-46, 53 to 55, Glu-109, Ala-112, and Glu-117 contribute to the ATP site; that span reads GRG. Mg(2+) contacts are provided by Asn-209 and Asp-223. Residues Asn-274 and 331–333 each bind substrate; that span reads GIM.

The protein belongs to the succinate/malate CoA ligase beta subunit family. In terms of assembly, heterotetramer of two alpha and two beta subunits. Mg(2+) is required as a cofactor.

The catalysed reaction is succinate + ATP + CoA = succinyl-CoA + ADP + phosphate. It catalyses the reaction GTP + succinate + CoA = succinyl-CoA + GDP + phosphate. It functions in the pathway carbohydrate metabolism; tricarboxylic acid cycle; succinate from succinyl-CoA (ligase route): step 1/1. Succinyl-CoA synthetase functions in the citric acid cycle (TCA), coupling the hydrolysis of succinyl-CoA to the synthesis of either ATP or GTP and thus represents the only step of substrate-level phosphorylation in the TCA. The beta subunit provides nucleotide specificity of the enzyme and binds the substrate succinate, while the binding sites for coenzyme A and phosphate are found in the alpha subunit. The chain is Succinate--CoA ligase [ADP-forming] subunit beta from Chelativorans sp. (strain BNC1).